The sequence spans 355 residues: Beta-ketoacyl-[acyl-carrier-protein] synthase III 1 (355 aa).

Active-site residues include cysteine 122 and histidine 280. The interval 281–285 (QANER) is ACP-binding. Asparagine 311 is a catalytic residue.

It belongs to the thiolase-like superfamily. FabH family. As to quaternary structure, homodimer.

Its subcellular location is the cytoplasm. The catalysed reaction is malonyl-[ACP] + acetyl-CoA + H(+) = 3-oxobutanoyl-[ACP] + CO2 + CoA. The protein operates within lipid metabolism; fatty acid biosynthesis. Functionally, catalyzes the condensation reaction of fatty acid synthesis by the addition to an acyl acceptor of two carbons from malonyl-ACP. Catalyzes the first condensation reaction which initiates fatty acid synthesis and may therefore play a role in governing the total rate of fatty acid production. Possesses both acetoacetyl-ACP synthase and acetyl transacylase activities. Its substrate specificity determines the biosynthesis of branched-chain and/or straight-chain of fatty acids. The sequence is that of Beta-ketoacyl-[acyl-carrier-protein] synthase III 1 from Streptomyces avermitilis (strain ATCC 31267 / DSM 46492 / JCM 5070 / NBRC 14893 / NCIMB 12804 / NRRL 8165 / MA-4680).